The chain runs to 246 residues: uncharacterized protein (246 aa).

The chain crosses the membrane as a helical span at residues 7 to 29; it reads GRGALASTGGCVVLAVAALMFVF.

The protein resides in the membrane. This is an uncharacterized protein from Treponema pallidum (strain Nichols).